Here is a 183-residue protein sequence, read N- to C-terminus: MADMKSIQADTREKMNKAIEAFENNLSVLRTGRANPGILKKIVVDYYGSQMPIDQVASITTPDPRTLVITPWDRGALNPIEKAIRDSDLGLNPNNKGDTIFISLPMLTEERRKDLVKNAKNYAEDARIAVRNLRKHALDEVKKVEGLGEDEIKRGEADVQKITDEYVARVESVFQKKEQEILG.

Belongs to the RRF family.

The protein resides in the cytoplasm. Functionally, responsible for the release of ribosomes from messenger RNA at the termination of protein biosynthesis. May increase the efficiency of translation by recycling ribosomes from one round of translation to another. This chain is Ribosome-recycling factor, found in Deinococcus radiodurans (strain ATCC 13939 / DSM 20539 / JCM 16871 / CCUG 27074 / LMG 4051 / NBRC 15346 / NCIMB 9279 / VKM B-1422 / R1).